Consider the following 526-residue polypeptide: Alpha-N-acetylgalactosaminide alpha-2,6-sialyltransferase 1 (526 aa).

Topologically, residues 1 to 12 (MTRYCRGLSQRQ) are cytoplasmic. A helical; Signal-anchor for type II membrane protein transmembrane segment spans residues 13-33 (AFLLLTVLALLFILLFVVKDP). The Lumenal segment spans residues 34 to 526 (RAKDSRCQFI…QRPQSDKAKN (493 aa)). The disordered stretch occupies residues 49–182 (SAQENQQKAE…TRRRQRLKAS (134 aa)). Positions 81–106 (KDLKKQEREAVQGEQAEGKEKRKLET) are enriched in basic and acidic residues. Over residues 161 to 171 (ATKSPASSPHP) the composition is skewed to polar residues. N-linked (GlcNAc...) asparagine glycosylation is found at Asn206, Asn228, Asn259, Asn303, and Asn388. Cystine bridges form between Cys207–Cys290 and Cys293–Cys461.

Belongs to the glycosyltransferase 29 family. In terms of processing, glycosylated; autosialylated. Submaxillary gland, mammary gland, spleen and colon.

The protein resides in the golgi apparatus membrane. It catalyses the reaction a beta-D-galactosyl-(1-&gt;3)-N-acetyl-alpha-D-galactosaminyl derivative + CMP-N-acetyl-beta-neuraminate = a beta-D-galactosyl-(1-&gt;3)-[N-acetyl-alpha-neuraminyl-(2-&gt;6)]-N-acetyl-alpha-D-galactosaminyl derivative + CMP + H(+). It carries out the reaction a 3-O-[N-acetyl-alpha-D-galactosaminyl]-L-seryl-[protein] + CMP-N-acetyl-beta-neuraminate = a 3-O-[N-acetyl-alpha-neuraminosyl-(2-&gt;6)-N-acetyl-alpha-D-galactosaminyl]-L-seryl-[protein] + CMP + H(+). The catalysed reaction is a 3-O-[N-acetyl-alpha-D-galactosaminyl]-L-threonyl-[protein] + CMP-N-acetyl-beta-neuraminate = a 3-O-[N-acetyl-alpha-neuraminosyl-(2-&gt;6)-N-acetyl-alpha-D-galactosaminyl]-L-threonyl-[protein] + CMP + H(+). The enzyme catalyses a 3-O-[beta-D-galactosyl-(1-&gt;3)-N-acetyl-alpha-D-galactosaminyl]-L-seryl-[protein] + CMP-N-acetyl-beta-neuraminate = a 3-O-{beta-D-galactosyl-(1-&gt;3)-[N-acetyl-alpha-neuraminosyl-(2-&gt;6)]-N-acetyl-alpha-D-galactosaminyl}-L-seryl-[protein] + CMP + H(+). It catalyses the reaction a 3-O-[beta-D-galactosyl-(1-&gt;3)-N-acetyl-alpha-D-galactosaminyl]-L-threonyl-[protein] + CMP-N-acetyl-beta-neuraminate = a 3-O-{beta-D-galactosyl-(1-&gt;3)-[N-acetyl-alpha-neuraminosyl-(2-&gt;6)]-N-acetyl-alpha-D-galactosaminyl}-L-threonyl-[protein] + CMP + H(+). It carries out the reaction a 3-O-[N-acetyl-alpha-neuraminyl-(2-&gt;3)-beta-D-galactosyl-(1-&gt;3)-N-acetyl-alpha-D-galactosaminyl]-L-threonyl-[protein] + CMP-N-acetyl-beta-neuraminate = a 3-O-{alpha-Neu5Ac-(2-&gt;3)-beta-D-Gal-(1-&gt;3)-[alpha-Neu5Ac-(2-&gt;6)]-alpha-D-GalNAc}-L-threonyl-[protein] + CMP + H(+). It participates in protein modification; protein glycosylation. Its function is as follows. Protein sialyltransferase specifically expressed in goblet cells that plays a key role in intestinal host-commensal homeostasis. Conjugates sialic acid with an alpha-2-6 linkage to N-acetylgalactosamine (GalNAc) glycan chains linked to serine or threonine in glycoproteins. Catalyzes the formation of the sialyl-Tn (S-Tn) antigen, an antigen found in intestinal goblet cells. Protein sialylation in globlet cells is essential for mucus integrity and is required to protect the intestinal mucus against excessive bacterial proteolytic degradation. This is Alpha-N-acetylgalactosaminide alpha-2,6-sialyltransferase 1 from Mus musculus (Mouse).